We begin with the raw amino-acid sequence, 159 residues long: Ribosomal RNA large subunit methyltransferase H (159 aa).

S-adenosyl-L-methionine is bound by residues Leu76, Gly108, and 127–132; that span reads FSKMTF.

The protein belongs to the RNA methyltransferase RlmH family. As to quaternary structure, homodimer.

The protein localises to the cytoplasm. The enzyme catalyses pseudouridine(1915) in 23S rRNA + S-adenosyl-L-methionine = N(3)-methylpseudouridine(1915) in 23S rRNA + S-adenosyl-L-homocysteine + H(+). Functionally, specifically methylates the pseudouridine at position 1915 (m3Psi1915) in 23S rRNA. The chain is Ribosomal RNA large subunit methyltransferase H from Staphylococcus aureus (strain MSSA476).